We begin with the raw amino-acid sequence, 396 residues long: MSKLKLNPYFGEYGGMYVPQILVPALKQLETAFVEAQEDDDFKAEFTDLLKNYAGRPTALTLTRNLSPNPMVKIYLKREDLLHGGAHKTNQVLGQALLAKRMGKKEIIAETGAGQHGVATALACALLGLKCKVYMGAKDVARQSPNVFRMRLMGAEVIPVTSGSATLKDACNEAMRDWSGSYEKAHYLLGTAAGPHPFPTIVREFQRIIGEETKKQMLEREGRLPDAVIACVGGGSNAIGMFADFIDEPSVELIGVEPAGKGIDTPMHGAPLKHGKTGIFFGMKAPLMQNSEGQIEESYSISAGLDFPSVGPQHAHLNATGRARYESATDDEALEAFQQLARCEGIIPALESAHAIAYAVKMARECTKETILVVNLSGRGDKDIFTVSDILNGKEV.

Lys-88 is subject to N6-(pyridoxal phosphate)lysine.

Belongs to the TrpB family. In terms of assembly, tetramer of two alpha and two beta chains. Pyridoxal 5'-phosphate is required as a cofactor.

The enzyme catalyses (1S,2R)-1-C-(indol-3-yl)glycerol 3-phosphate + L-serine = D-glyceraldehyde 3-phosphate + L-tryptophan + H2O. The protein operates within amino-acid biosynthesis; L-tryptophan biosynthesis; L-tryptophan from chorismate: step 5/5. Its function is as follows. The beta subunit is responsible for the synthesis of L-tryptophan from indole and L-serine. This is Tryptophan synthase beta chain from Shewanella baltica (strain OS155 / ATCC BAA-1091).